The primary structure comprises 364 residues: Chorismate synthase (364 aa).

NADP(+) contacts are provided by Arg-48 and Arg-54. FMN contacts are provided by residues 125-127, 238-239, Gly-278, 293-297, and Arg-319; these read RSS, NA, and KPTSS.

Belongs to the chorismate synthase family. Homotetramer. The cofactor is FMNH2.

The catalysed reaction is 5-O-(1-carboxyvinyl)-3-phosphoshikimate = chorismate + phosphate. The protein operates within metabolic intermediate biosynthesis; chorismate biosynthesis; chorismate from D-erythrose 4-phosphate and phosphoenolpyruvate: step 7/7. Functionally, catalyzes the anti-1,4-elimination of the C-3 phosphate and the C-6 proR hydrogen from 5-enolpyruvylshikimate-3-phosphate (EPSP) to yield chorismate, which is the branch point compound that serves as the starting substrate for the three terminal pathways of aromatic amino acid biosynthesis. This reaction introduces a second double bond into the aromatic ring system. This is Chorismate synthase from Shewanella sediminis (strain HAW-EB3).